Here is a 424-residue protein sequence, read N- to C-terminus: Galacturonokinase (424 aa).

Serine 2 carries the N-acetylserine modification. Position 146-155 (146-155) interacts with ATP; it reads DSSGLSSSAA. Catalysis depends on aspartate 197, which acts as the Proton acceptor.

This sequence belongs to the GHMP kinase family. The cofactor is Mg(2+). Mn(2+) is required as a cofactor. It depends on Ca(2+) as a cofactor. Expressed in roots, stems, leaves, flowers and young siliques. Higher expression in the elongating middle stem region than in the lower or upper stem region.

The enzyme catalyses D-galacturonate + ATP = 1-phospho-alpha-D-galacturonate + ADP + H(+). Its activity is regulated as follows. Inhibited by EDTA and ADP. Functionally, sugar-1-kinase with a strict substrate specificity for the alpha-anomeric configuration of D-galacturonic acid (D-GalA) and ATP. Involved in the biosynthesis of UDP-galacturonic acid (UDP-GalA) from the salvaged GalA that is released during growth-dependent cell wall restructuring. In Arabidopsis thaliana (Mouse-ear cress), this protein is Galacturonokinase (GALAK).